Consider the following 167-residue polypeptide: Small ribosomal subunit protein uS5 (167 aa).

The 64-residue stretch at 11-74 folds into the S5 DRBM domain; it reads LQEKLIAVNR…EKARRAMINV (64 aa).

This sequence belongs to the universal ribosomal protein uS5 family. As to quaternary structure, part of the 30S ribosomal subunit. Contacts proteins S4 and S8.

In terms of biological role, with S4 and S12 plays an important role in translational accuracy. Its function is as follows. Located at the back of the 30S subunit body where it stabilizes the conformation of the head with respect to the body. The polypeptide is Small ribosomal subunit protein uS5 (Serratia proteamaculans (strain 568)).